Reading from the N-terminus, the 57-residue chain is Granulin-3 (57 aa).

Intrachain disulfides connect Cys-4–Cys-16 and Cys-10–Cys-26.

This sequence belongs to the granulin family. Post-translationally, granulins are disulfide bridged. Ubiquitous.

The protein localises to the secreted. In terms of biological role, granulins have possible cytokine-like activity. They may play a role in inflammation, wound repair, and tissue remodeling. This chain is Granulin-3, found in Cyprinus carpio (Common carp).